A 2048-amino-acid polypeptide reads, in one-letter code: Myoferlin (2048 aa).

Residues 1-101 (MLRVIVESAT…IGDQNRSLPY (101 aa)) enclose the C2 1 domain. Residues 1 to 2012 (MLRVIVESAT…MRFIVWRRFK (2012 aa)) are Cytoplasmic-facing. Residues 124–176 (YTPPSAPHPNDPSGTSVPGMGEEEEEDQGDEDRVDGIVRGPGPKGPSGTVSEA) form a disordered region. A compositionally biased stretch (acidic residues) spans 144–156 (GEEEEEDQGDEDR). Phosphoserine is present on residues Ser170 and Ser174. C2 domains lie at 183–300 (TKGK…RKWL) and 339–475 (DSDD…EATT). Positions 186–281 (KSSRRMLSNK…RADCLMGEFK (96 aa)) are necessary for interaction with EHD2. Ca(2+)-binding residues include Asp390, Asp396, Asp444, Asp446, and Asp452. N6-acetyllysine is present on residues Lys540 and Lys871. 2 C2 domains span residues 1110–1238 (GANT…LLWH) and 1269–1397 (LPSQ…GKED). 4 residues coordinate Ca(2+): Asp1142, Asp1148, Asp1204, and Asp1206. At Lys1494 the chain carries N6-acetyllysine. 2 C2 domains span residues 1523–1641 (PAPP…SHCG) and 1759–1907 (GPPG…EKCS). Ca(2+) contacts are provided by Asp1556, Asp1562, Asp1611, Asp1613, Asp1878, Ser1881, and Asp1884. Over residues 1964-1975 (EADERPAGKGRS) the composition is skewed to basic and acidic residues. Positions 1964–1986 (EADERPAGKGRSEPNMNPKLDPP) are disordered. A helical membrane pass occupies residues 2013–2033 (WVIIGLLLLLILLLFVAVLLY). The Extracellular portion of the chain corresponds to 2034-2048 (SLPNYLSMKIVRPNA).

This sequence belongs to the ferlin family. In terms of assembly, interacts with EHD1. Interacts with EHD2; the interaction is direct. Interacts with DNM2 and KDR. Interacts with RIPOR2. Requires Ca(2+) as cofactor. As to expression, expressed in myoblasts (at protein level). Expressed in endothelial cells.

It is found in the cell membrane. The protein resides in the nucleus membrane. It localises to the cytoplasmic vesicle membrane. In terms of biological role, calcium/phospholipid-binding protein that plays a role in the plasmalemma repair mechanism of endothelial cells that permits rapid resealing of membranes disrupted by mechanical stress. Involved in endocytic recycling. Implicated in VEGF signal transduction by regulating the levels of the receptor KDR. In Mus musculus (Mouse), this protein is Myoferlin (Myof).